A 947-amino-acid polypeptide reads, in one-letter code: DNA mismatch repair protein MutS (947 aa).

620–627 (GPNMSGKS) contributes to the ATP binding site.

Belongs to the DNA mismatch repair MutS family.

This protein is involved in the repair of mismatches in DNA. It is possible that it carries out the mismatch recognition step. This protein has a weak ATPase activity. This is DNA mismatch repair protein MutS from Clostridioides difficile (strain 630) (Peptoclostridium difficile).